Reading from the N-terminus, the 444-residue chain is Ribulose bisphosphate carboxylase large chain (444 aa).

Lys7 carries the post-translational modification N6,N6,N6-trimethyllysine. Substrate is bound by residues Asn116 and Thr166. The active-site Proton acceptor is the Lys168. Lys170 serves as a coordination point for substrate. Lys194, Asp196, and Glu197 together coordinate Mg(2+). Lys194 bears the N6-carboxylysine mark. His287 functions as the Proton acceptor in the catalytic mechanism. Substrate contacts are provided by Arg288, His320, and Ser372.

This sequence belongs to the RuBisCO large chain family. Type I subfamily. In terms of assembly, heterohexadecamer of 8 large chains and 8 small chains; disulfide-linked. The disulfide link is formed within the large subunit homodimers. Requires Mg(2+) as cofactor. The disulfide bond which can form in the large chain dimeric partners within the hexadecamer appears to be associated with oxidative stress and protein turnover.

It is found in the plastid. The protein resides in the chloroplast. It carries out the reaction 2 (2R)-3-phosphoglycerate + 2 H(+) = D-ribulose 1,5-bisphosphate + CO2 + H2O. It catalyses the reaction D-ribulose 1,5-bisphosphate + O2 = 2-phosphoglycolate + (2R)-3-phosphoglycerate + 2 H(+). In terms of biological role, ruBisCO catalyzes two reactions: the carboxylation of D-ribulose 1,5-bisphosphate, the primary event in carbon dioxide fixation, as well as the oxidative fragmentation of the pentose substrate in the photorespiration process. Both reactions occur simultaneously and in competition at the same active site. The sequence is that of Ribulose bisphosphate carboxylase large chain from Watsonia angusta.